Reading from the N-terminus, the 330-residue chain is N-acetyl-gamma-glutamyl-phosphate reductase (330 aa).

Residue Cys143 is part of the active site.

Belongs to the NAGSA dehydrogenase family. Type 1 subfamily.

It localises to the cytoplasm. The catalysed reaction is N-acetyl-L-glutamate 5-semialdehyde + phosphate + NADP(+) = N-acetyl-L-glutamyl 5-phosphate + NADPH + H(+). Its pathway is amino-acid biosynthesis; L-arginine biosynthesis; N(2)-acetyl-L-ornithine from L-glutamate: step 3/4. Catalyzes the NADPH-dependent reduction of N-acetyl-5-glutamyl phosphate to yield N-acetyl-L-glutamate 5-semialdehyde. In Methanocorpusculum labreanum (strain ATCC 43576 / DSM 4855 / Z), this protein is N-acetyl-gamma-glutamyl-phosphate reductase.